The following is a 370-amino-acid chain: Probable trehalose-phosphate phosphatase J (370 aa).

It belongs to the trehalose phosphatase family. A divalent metal cation serves as cofactor.

It catalyses the reaction alpha,alpha-trehalose 6-phosphate + H2O = alpha,alpha-trehalose + phosphate. The protein operates within glycan biosynthesis; trehalose biosynthesis. Its function is as follows. Removes the phosphate from trehalose 6-phosphate to produce free trehalose. Trehalose accumulation in plant may improve abiotic stress tolerance. This is Probable trehalose-phosphate phosphatase J (TPPJ) from Arabidopsis thaliana (Mouse-ear cress).